Reading from the N-terminus, the 100-residue chain is Large ribosomal subunit protein uL23 (100 aa).

This sequence belongs to the universal ribosomal protein uL23 family. As to quaternary structure, part of the 50S ribosomal subunit. Contacts protein L29, and trigger factor when it is bound to the ribosome.

In terms of biological role, one of the early assembly proteins it binds 23S rRNA. One of the proteins that surrounds the polypeptide exit tunnel on the outside of the ribosome. Forms the main docking site for trigger factor binding to the ribosome. In Shewanella sp. (strain MR-4), this protein is Large ribosomal subunit protein uL23.